Reading from the N-terminus, the 443-residue chain is Glutamate--tRNA ligase 1 (443 aa).

The 'HIGH' region motif lies at 10-20; the sequence is PSPTGYIHVGN. The 'KMSKS' region motif lies at 241–245; the sequence is ALSKR. Position 244 (lysine 244) interacts with ATP.

Belongs to the class-I aminoacyl-tRNA synthetase family. Glutamate--tRNA ligase type 1 subfamily. Monomer.

The protein resides in the cytoplasm. It catalyses the reaction tRNA(Glu) + L-glutamate + ATP = L-glutamyl-tRNA(Glu) + AMP + diphosphate. Functionally, catalyzes the attachment of glutamate to tRNA(Glu) in a two-step reaction: glutamate is first activated by ATP to form Glu-AMP and then transferred to the acceptor end of tRNA(Glu). The polypeptide is Glutamate--tRNA ligase 1 (Ruegeria pomeroyi (strain ATCC 700808 / DSM 15171 / DSS-3) (Silicibacter pomeroyi)).